The following is a 128-amino-acid chain: Sm-like protein LSM1B (128 aa).

Positions 10-85 (YLSTSLASYL…VVLIGELDTE (76 aa)) constitute a Sm domain.

Belongs to the snRNP Sm proteins family. In terms of assembly, component of the heptameric LSM1-LSM7 complex that forms a seven-membered ring structure with a donut shape. The LSM subunits are arranged in the order LSM1, LSM2, LSM3, LSM6, LSM5, LSM7 and LSM4. LSM1B subunit interacts only with its two neighboring subunits, LSM2 and LSM4. As to expression, expressed in roots, leaves, stems, flowers and siliques.

It is found in the cytoplasm. The protein resides in the P-body. Functionally, component of the cytoplasmic LSM1-LSM7 complex which is involved in mRNA degradation by promoting decapping and leading to accurate 5'-3' mRNA decay. LSM1A and LSM1B are essential for the formation of the cytoplasmic LSM1-LSM7 complex which regulates developmental gene expression by the decapping of specific development-related transcripts. Required for P-body formation during heat stress. This chain is Sm-like protein LSM1B, found in Arabidopsis thaliana (Mouse-ear cress).